Consider the following 587-residue polypeptide: Kelch-like protein 3 (587 aa).

A Phosphoserine modification is found at Ser10. A BTB domain is found at Cys50–Glu117. The 103-residue stretch at Cys152–Glu254 folds into the BACK domain. Residue Thr295 is modified to Phosphothreonine. Kelch repeat units follow at residues Val302–Gly347, His348–Asp394, Leu396–Gly441, Lys442–Gly490, Gln491–Gly537, and Leu539–Lys585. Thr375 is modified (phosphothreonine). Ser376 is subject to Phosphoserine. Ser433 is subject to Phosphoserine; by PKA and PKC.

Belongs to the KLHL3 family. In terms of assembly, homodimer. Component of the BCR(KLHL3) E3 ubiquitin ligase complex, at least composed of CUL3 and KLHL3 and RBX1. Interacts with CLDN8. Post-translationally, phosphorylation at Ser-433 by PKA or PKC decreases the interaction with WNK1 and WNK4, leading to inhibit their degradation by the BCR(KLHL3) complex. Phosphorylated at Ser-433 by PKC in response to angiotensin II signaling, decreasing ability to promote degradation of WNK1 and WNK4, leading to activation of Na-Cl cotransporter SLC12A3/NCC. Phosphorylation at Ser-433 is increased by insulin. Dephosphorylated at Ser-433 by calcineurin PPP3CA, promoting degradation of WNK1 and WNK4. In terms of tissue distribution, widely expressed.

Its subcellular location is the cytoplasm. The protein resides in the cytosol. It localises to the cytoskeleton. It participates in protein modification; protein ubiquitination. Functionally, substrate-specific adapter of a BCR (BTB-CUL3-RBX1) E3 ubiquitin ligase complex that acts as a regulator of ion transport in the distal nephron. The BCR(KLHL3) complex acts by mediating ubiquitination and degradation of WNK1 and WNK4, two activators of Na-Cl cotransporter SLC12A3/NCC in distal convoluted tubule cells of kidney, thereby regulating NaCl reabsorption. The BCR(KLHL3) complex also mediates ubiquitination and degradation of WNK3. The BCR(KLHL3) complex also mediates ubiquitination of CLDN8, a tight-junction protein required for paracellular chloride transport in the kidney, leading to its degradation. In Homo sapiens (Human), this protein is Kelch-like protein 3.